A 153-amino-acid polypeptide reads, in one-letter code: uncharacterized protein (153 aa).

2 helical membrane passes run 1 to 21 (MAAT…LFFS) and 106 to 126 (IVPI…TVYI).

It localises to the membrane. This is an uncharacterized protein from Saccharomyces cerevisiae (strain ATCC 204508 / S288c) (Baker's yeast).